The chain runs to 752 residues: Peptidyl-prolyl cis-trans isomerase G (752 aa).

Positions 11-176 (FFDIAINNQP…AEVRILSCGE (166 aa)) constitute a PPIase cyclophilin-type domain. Over residues 182 to 193 (KVKKEEKKRHKS) the composition is skewed to basic residues. The interval 182-752 (KVKKEEKKRH…SPGTDEDKSG (571 aa)) is disordered. The segment covering 194–214 (SSSSSSSDSDSSSDSQSSSES) has biased composition (low complexity). Residues 226-251 (RKRKKKHRKNSRKHKKEKKKRKKSKK) show a composition bias toward basic residues. Phosphoserine occurs at positions 252, 254, 255, 257, and 288. A compositionally biased stretch (basic and acidic residues) spans 290-308 (PKADDKERKNREREREREC). Ser313 carries the post-translational modification Phosphoserine. Residues 327 to 345 (SGRKIKGRGPRRYRTPSRS) show a composition bias toward basic residues. Basic and acidic residues-rich tracts occupy residues 346 to 366 (RSRD…EMQR) and 377 to 447 (RWIK…DKYN). Position 354 is a phosphoserine (Ser354). Thr356 carries the post-translational modification Phosphothreonine. Ser384 bears the Phosphoserine mark. Lys390 participates in a covalent cross-link: Glycyl lysine isopeptide (Lys-Gly) (interchain with G-Cter in SUMO2). A phosphoserine mark is found at Ser395, Ser411, and Ser413. Residues 448-461 (KNKVKKRGKSKSRS) are compositionally biased toward basic residues. Basic and acidic residues-rich tracts occupy residues 462 to 552 (KSKE…DLTK) and 577 to 598 (RSHD…QEYR). Residues 599–625 (RRGRSRSRDRRTPGRSRSKDRRRRRRD) are compositionally biased toward basic residues. Positions 626-684 (SRSSEREESQSRNKDKYRSQESKSSHRKENSEGEKRTYSKSRDHNSSSNNREKKADREQ) are enriched in basic and acidic residues. Residues Ser685 and Ser688 each carry the phosphoserine modification. A compositionally biased stretch (polar residues) spans 685 to 705 (SPVSKTKQSSQDNEVKSSTLK). Lys691 participates in a covalent cross-link: Glycyl lysine isopeptide (Lys-Gly) (interchain with G-Cter in SUMO2). Phosphoserine is present on residues Ser694, Ser742, and Ser743. A compositionally biased stretch (basic and acidic residues) spans 706–752 (NQEDEKTRSPVEKENQKSKGQENDHVHDKNKKCDHESSPGTDEDKSG). A Phosphothreonine modification is found at Thr746. Ser751 carries the phosphoserine modification.

Interacts with CLK1, PNN and with the phosphorylated C-terminal domain of RNA polymerase II.

The protein localises to the nucleus matrix. It is found in the nucleus speckle. The enzyme catalyses [protein]-peptidylproline (omega=180) = [protein]-peptidylproline (omega=0). With respect to regulation, inhibited by cyclosporin A (CsA). In terms of biological role, PPIase that catalyzes the cis-trans isomerization of proline imidic peptide bonds in oligopeptides and may therefore assist protein folding. May be implicated in the folding, transport, and assembly of proteins. May play an important role in the regulation of pre-mRNA splicing. This chain is Peptidyl-prolyl cis-trans isomerase G (Ppig), found in Mus musculus (Mouse).